Here is a 294-residue protein sequence, read N- to C-terminus: METISRQNKPQQQLIGAHMSAAGGVHKAVERAEAAGATALQVFTRNQRQWNAPPLEEHDAELFTAAVRRWGGYPVSSHASYLINPAADTPEGAERSVALMADELQRAGRLGIEMVVVHPGAHKGQGEAAGAALAAARLDEALERCGSPAVMVLLENTAGQGTMLGASFAGLAAVIEASRMPERYGICLDTAHAFGAGYDLRDAALYDAAIRELDVCAGLDRLRLVHANDSLTGLGSRRDRHTHIGQGELGEAAFRLLMRDERLHHVPKVLETPKGKGPEEDMMNMAVLRRLACP.

His78, His118, Glu155, Asp189, His192, His226, Asp239, His241, and Glu271 together coordinate Zn(2+).

Belongs to the AP endonuclease 2 family. Requires Zn(2+) as cofactor.

The catalysed reaction is Endonucleolytic cleavage to 5'-phosphooligonucleotide end-products.. In terms of biological role, endonuclease IV plays a role in DNA repair. It cleaves phosphodiester bonds at apurinic or apyrimidinic (AP) sites, generating a 3'-hydroxyl group and a 5'-terminal sugar phosphate. This is Probable endonuclease 4 from Oleidesulfovibrio alaskensis (strain ATCC BAA-1058 / DSM 17464 / G20) (Desulfovibrio alaskensis).